A 213-amino-acid chain; its full sequence is ATP phosphoribosyltransferase (213 aa).

Belongs to the ATP phosphoribosyltransferase family. Short subfamily. Heteromultimer composed of HisG and HisZ subunits.

The protein localises to the cytoplasm. The catalysed reaction is 1-(5-phospho-beta-D-ribosyl)-ATP + diphosphate = 5-phospho-alpha-D-ribose 1-diphosphate + ATP. It participates in amino-acid biosynthesis; L-histidine biosynthesis; L-histidine from 5-phospho-alpha-D-ribose 1-diphosphate: step 1/9. Catalyzes the condensation of ATP and 5-phosphoribose 1-diphosphate to form N'-(5'-phosphoribosyl)-ATP (PR-ATP). Has a crucial role in the pathway because the rate of histidine biosynthesis seems to be controlled primarily by regulation of HisG enzymatic activity. The polypeptide is ATP phosphoribosyltransferase (Thermoanaerobacter pseudethanolicus (strain ATCC 33223 / 39E) (Clostridium thermohydrosulfuricum)).